A 406-amino-acid chain; its full sequence is S-adenosylmethionine synthase (406 aa).

His-16 is an ATP binding site. Asp-18 contacts Mg(2+). Glu-44 is a binding site for K(+). L-methionine is bound by residues Glu-57 and Gln-100. The segment at 100-110 is flexible loop; sequence QSVDIAQGVDR. ATP contacts are provided by residues 165 to 167, Asp-241, 247 to 248, Ala-264, and Lys-268; these read DAK and RK. An L-methionine-binding site is contributed by Asp-241. Lys-272 lines the L-methionine pocket.

The protein belongs to the AdoMet synthase family. Homotetramer; dimer of dimers. The cofactor is Mg(2+). It depends on K(+) as a cofactor.

The protein localises to the cytoplasm. The enzyme catalyses L-methionine + ATP + H2O = S-adenosyl-L-methionine + phosphate + diphosphate. Its pathway is amino-acid biosynthesis; S-adenosyl-L-methionine biosynthesis; S-adenosyl-L-methionine from L-methionine: step 1/1. Its function is as follows. Catalyzes the formation of S-adenosylmethionine (AdoMet) from methionine and ATP. The overall synthetic reaction is composed of two sequential steps, AdoMet formation and the subsequent tripolyphosphate hydrolysis which occurs prior to release of AdoMet from the enzyme. The sequence is that of S-adenosylmethionine synthase from Chromohalobacter salexigens (strain ATCC BAA-138 / DSM 3043 / CIP 106854 / NCIMB 13768 / 1H11).